A 264-amino-acid chain; its full sequence is Shikimate dehydrogenase (NADP(+)) (264 aa).

Shikimate-binding positions include 14–16 and T61; that span reads SVS. The Proton acceptor role is filled by K65. Shikimate contacts are provided by N85 and D99. Residues 122–126, 145–150, and A208 each bind NADP(+); these read GAGGA and NRTVSR. Residue Y210 coordinates shikimate. G231 provides a ligand contact to NADP(+).

The protein belongs to the shikimate dehydrogenase family. Homodimer.

The catalysed reaction is shikimate + NADP(+) = 3-dehydroshikimate + NADPH + H(+). It functions in the pathway metabolic intermediate biosynthesis; chorismate biosynthesis; chorismate from D-erythrose 4-phosphate and phosphoenolpyruvate: step 4/7. Involved in the biosynthesis of the chorismate, which leads to the biosynthesis of aromatic amino acids. Catalyzes the reversible NADPH linked reduction of 3-dehydroshikimate (DHSA) to yield shikimate (SA). This Natronomonas pharaonis (strain ATCC 35678 / DSM 2160 / CIP 103997 / JCM 8858 / NBRC 14720 / NCIMB 2260 / Gabara) (Halobacterium pharaonis) protein is Shikimate dehydrogenase (NADP(+)).